The chain runs to 278 residues: Potassium/proton antiporter CemA (278 aa).

4 helical membrane-spanning segments follow: residues 61 to 81, 154 to 174, 203 to 223, and 238 to 258; these read VVFL…FLFG, CAIT…SILI, IILF…EVII, and FIFV…KYWI.

This sequence belongs to the CemA family.

The protein resides in the plastid. The protein localises to the chloroplast inner membrane. It catalyses the reaction K(+)(in) + H(+)(out) = K(+)(out) + H(+)(in). Functionally, contributes to K(+)/H(+) antiport activity by supporting proton efflux to control proton extrusion and homeostasis in chloroplasts in a light-dependent manner to modulate photosynthesis. Prevents excessive induction of non-photochemical quenching (NPQ) under continuous-light conditions. Indirectly promotes efficient inorganic carbon uptake into chloroplasts. The polypeptide is Potassium/proton antiporter CemA (Gracilaria tenuistipitata var. liui (Red alga)).